The chain runs to 380 residues: Cytochrome b (380 aa).

4 helical membrane passes run 34-54 (FGSL…FLAM), 78-99 (WLLR…YMHI), 114-134 (WNIG…GYVL), and 179-199 (FFAF…VHLL). 2 residues coordinate heme b: His84 and His98. Heme b-binding residues include His183 and His197. Residue His202 coordinates a ubiquinone. A run of 4 helical transmembrane segments spans residues 227–247 (YKDV…ALFS), 289–309 (LGGV…PFVH), 321–341 (LAQV…WLGG), and 348–368 (YIFL…LFIP).

The protein belongs to the cytochrome b family. In terms of assembly, the cytochrome bc1 complex contains 3 respiratory subunits (MT-CYB, CYC1 and UQCRFS1), 2 core proteins (UQCRC1 and UQCRC2) and probably 6 low-molecular weight proteins. The cofactor is heme b.

Its subcellular location is the mitochondrion inner membrane. Functionally, component of the ubiquinol-cytochrome c reductase complex (complex III or cytochrome b-c1 complex) that is part of the mitochondrial respiratory chain. The b-c1 complex mediates electron transfer from ubiquinol to cytochrome c. Contributes to the generation of a proton gradient across the mitochondrial membrane that is then used for ATP synthesis. The polypeptide is Cytochrome b (MT-CYB) (Branchiostoma lanceolatum (Common lancelet)).